The primary structure comprises 382 residues: Ribosomal RNA large subunit methyltransferase G (382 aa).

The protein belongs to the methyltransferase superfamily. RlmG family.

It localises to the cytoplasm. The catalysed reaction is guanosine(1835) in 23S rRNA + S-adenosyl-L-methionine = N(2)-methylguanosine(1835) in 23S rRNA + S-adenosyl-L-homocysteine + H(+). Its function is as follows. Specifically methylates the guanine in position 1835 (m2G1835) of 23S rRNA. The sequence is that of Ribosomal RNA large subunit methyltransferase G from Pseudoalteromonas translucida (strain TAC 125).